We begin with the raw amino-acid sequence, 358 residues long: DNA polymerase IV (358 aa).

One can recognise a UmuC domain in the interval 4–185 (IIHIDMDCYF…LPLIKIPGVG (182 aa)). The Mg(2+) site is built by Asp8 and Asp103. Glu104 is an active-site residue.

The protein belongs to the DNA polymerase type-Y family. Monomer. The cofactor is Mg(2+).

The protein localises to the cytoplasm. It catalyses the reaction DNA(n) + a 2'-deoxyribonucleoside 5'-triphosphate = DNA(n+1) + diphosphate. Functionally, poorly processive, error-prone DNA polymerase involved in untargeted mutagenesis. Copies undamaged DNA at stalled replication forks, which arise in vivo from mismatched or misaligned primer ends. These misaligned primers can be extended by PolIV. Exhibits no 3'-5' exonuclease (proofreading) activity. May be involved in translesional synthesis, in conjunction with the beta clamp from PolIII. The sequence is that of DNA polymerase IV from Shewanella denitrificans (strain OS217 / ATCC BAA-1090 / DSM 15013).